The following is an 85-amino-acid chain: uncharacterized protein (85 aa).

This is an uncharacterized protein from Saccharomyces cerevisiae (strain ATCC 204508 / S288c) (Baker's yeast).